A 156-amino-acid polypeptide reads, in one-letter code: MPRKGPAPKRPLVQDPVYGSPLVTQLINKVLVDGKKSTAERIVYGALEGARAKSGGDPVAALKKAMDNVKPSLEVRSRRVGGATYQVPVEVKPGRSTALALRWLVGYSKARREKTMTERLQNEILDASNGLGAAVKRREDTHKMAESNKAFAHYRW.

It belongs to the universal ribosomal protein uS7 family. Part of the 30S ribosomal subunit. Contacts proteins S9 and S11.

Functionally, one of the primary rRNA binding proteins, it binds directly to 16S rRNA where it nucleates assembly of the head domain of the 30S subunit. Is located at the subunit interface close to the decoding center, probably blocks exit of the E-site tRNA. This Pseudarthrobacter chlorophenolicus (strain ATCC 700700 / DSM 12829 / CIP 107037 / JCM 12360 / KCTC 9906 / NCIMB 13794 / A6) (Arthrobacter chlorophenolicus) protein is Small ribosomal subunit protein uS7.